We begin with the raw amino-acid sequence, 377 residues long: DNA methyltransferase CcrM (377 aa).

In terms of domain architecture, RAMA spans 271–373 (LGKAELTVMT…LRKIIREQMA (103 aa)).

Belongs to the N(4)/N(6)-methyltransferase family.

The catalysed reaction is a 2'-deoxyadenosine in DNA + S-adenosyl-L-methionine = an N(6)-methyl-2'-deoxyadenosine in DNA + S-adenosyl-L-homocysteine + H(+). A beta subtype methylase that recognizes the double-stranded sequence 5'-GANTC-3' and methylates on A-2 on both strands. Overexpression from a moderate-copy number plasmid (10-12 copies/cell) leads to enlarged, branched cells, many with 3-5 genome equivalents. Contributes to the accurate cell-cycle control of DNA replication and cellular morphology. This chain is DNA methyltransferase CcrM, found in Brucella abortus (strain 2308).